Reading from the N-terminus, the 514-residue chain is Maturase K (514 aa).

Belongs to the intron maturase 2 family. MatK subfamily.

The protein resides in the plastid. Its subcellular location is the chloroplast. Usually encoded in the trnK tRNA gene intron. Probably assists in splicing its own and other chloroplast group II introns. This is Maturase K from Acer palmatum (Japanese maple).